Reading from the N-terminus, the 95-residue chain is Defensin-like protein 247 (95 aa).

Residues Met-1 to Gly-24 form the signal peptide. Disulfide bonds link Cys-37-Cys-94, Cys-48-Cys-77, Cys-56-Cys-87, and Cys-75-Cys-89.

It belongs to the DEFL family.

The protein localises to the secreted. This Arabidopsis thaliana (Mouse-ear cress) protein is Defensin-like protein 247 (SCRL6).